Reading from the N-terminus, the 107-residue chain is Large ribosomal subunit protein uL24 (107 aa).

Belongs to the universal ribosomal protein uL24 family. As to quaternary structure, part of the 50S ribosomal subunit.

One of two assembly initiator proteins, it binds directly to the 5'-end of the 23S rRNA, where it nucleates assembly of the 50S subunit. Functionally, one of the proteins that surrounds the polypeptide exit tunnel on the outside of the subunit. This Nitrosomonas eutropha (strain DSM 101675 / C91 / Nm57) protein is Large ribosomal subunit protein uL24.